The following is an 88-amino-acid chain: Acylphosphatase (88 aa).

In terms of domain architecture, Acylphosphatase-like spans 3-88; the sequence is AARFIFTGVV…IPTTEAFVTG (86 aa). Catalysis depends on residues Arg-18 and Asn-36.

It belongs to the acylphosphatase family.

It carries out the reaction an acyl phosphate + H2O = a carboxylate + phosphate + H(+). The chain is Acylphosphatase (acyP) from Xanthomonas campestris pv. campestris (strain 8004).